A 706-amino-acid chain; its full sequence is MAHDNREPREVKNHLLFEVATEVAHRVGGIYSVLKSKAPVTTAEYGDRYTLIGPLNHQSAAVEVEELEPSNPELKATIQAMRDRGIGILYGRWLIEGAPRVLLFDTKTAYGYMNEWKTDLWNVASIPSPDNDEETNEAIVFGYLVAWFLGEFVCHEKRKAVIAHFHEWLAGVALPLTKKRQIDVTTIFTTHATLLGRYLCAGSVDFYNNLQWFDVDAEAGKRGIYHRYCIERAAAHSCDVFTTVSHITAYESEHLLKRKPDGVLPNGLNVTKFSAMHEFQNLHQQNKEKIHDFVRGHFYGHYDFEPENTLYFFTAGRYEFRNKGVDMFIESLARLNHRLKTAGSKTTVVAFIIMPAQTTSLTVEALKGQAVIKSLRDTVDVIERGIGRRIFERSVKWHEGDPLPEEKELITSQDRVLLRRRLFAMKRHTLPPIVTHNMLNDHEDPILNQIRRVQLFNHPSDRVKIVFHPEFLSSANPVLPLDYDDFVRGTHLGVFASYYEPWGYTPAECTVMGVPSITTNLSGFGCYMEELIENSSDYGIYIVDRRSKGVDDSVNQLTQYMFEFTQKSRRQRINQRNRTERLSDLLDWKRMGMEYVKARQLALRRAYPTSFNGEEEEDFIPGVEQKISRPFSVPGSPRDRTGMMTPGDFASLQESHEGLSTEDYVAWKLPEEEDPEEYPFPLTLKQRTGPGSPLDSIQGLQLNGTR.

Arginine 26 contributes to the UDP binding site. The UDP-alpha-D-glucose site is built by histidine 191 and arginine 197. Positions 277, 278, 280, 283, and 287 each coordinate alpha-D-glucose 6-phosphate. Position 317 (arginine 317) interacts with UDP. Arginine 317 provides a ligand contact to UDP-alpha-D-glucose. Histidine 491 contacts alpha-D-glucose 6-phosphate. Residues glutamate 500, tryptophan 502, and glycine 503 each coordinate UDP-alpha-D-glucose. Residue threonine 505 coordinates UDP. The alpha-D-glucose 6-phosphate site is built by arginine 572 and arginine 576. The segment at 670 to 706 (PEEEDPEEYPFPLTLKQRTGPGSPLDSIQGLQLNGTR) is disordered.

It belongs to the glycosyltransferase 3 family. In terms of assembly, interacts with glucogenin gnn; the interaction is direct.

It catalyses the reaction [(1-&gt;4)-alpha-D-glucosyl](n) + UDP-alpha-D-glucose = [(1-&gt;4)-alpha-D-glucosyl](n+1) + UDP + H(+). It participates in glycan biosynthesis; glycogen biosynthesis. Allosteric activation by glucose-6-phosphate, and phosphorylation by a cAMP-dependent kinase. Its function is as follows. Glycogen synthase participates in the glycogen biosynthetic process along with glycogenin and glycogen branching enzyme. Extends the primer composed of a few glucose units formed by glycogenin by adding new glucose units to it. In this context, glycogen synthase transfers the glycosyl residue from UDP-Glc to the non-reducing end of alpha-1,4-glucan. In Neurospora crassa (strain ATCC 24698 / 74-OR23-1A / CBS 708.71 / DSM 1257 / FGSC 987), this protein is Glycogen [starch] synthase (gsy-1).